The following is a 292-amino-acid chain: RNA-binding P34 protein (292 aa).

Residues 29-46 form a helical membrane-spanning segment; that stretch reads CAIYTVACRILFLSVGFM. The RNA-binding stretch occupies residues 219–292; the sequence is EGFKSPQVEY…NFKAKNKNNE (74 aa).

The protein localises to the host endoplasmic reticulum membrane. Acts as a ssRNA-binding protein that may be involved in targeting RNA2 to replication sites or facilitating RNA2 replication. In Lettuce infectious yellows virus (isolate United States/92) (LIYV), this protein is RNA-binding P34 protein.